The following is a 427-amino-acid chain: UPF0597 protein CD630_32320 (427 aa).

This sequence belongs to the UPF0597 family.

This Clostridioides difficile (strain 630) (Peptoclostridium difficile) protein is UPF0597 protein CD630_32320.